Here is a 252-residue protein sequence, read N- to C-terminus: Imidazole glycerol phosphate synthase subunit HisF (252 aa).

Residues aspartate 11 and aspartate 130 contribute to the active site.

This sequence belongs to the HisA/HisF family. In terms of assembly, heterodimer of HisH and HisF.

The protein localises to the cytoplasm. It catalyses the reaction 5-[(5-phospho-1-deoxy-D-ribulos-1-ylimino)methylamino]-1-(5-phospho-beta-D-ribosyl)imidazole-4-carboxamide + L-glutamine = D-erythro-1-(imidazol-4-yl)glycerol 3-phosphate + 5-amino-1-(5-phospho-beta-D-ribosyl)imidazole-4-carboxamide + L-glutamate + H(+). Its pathway is amino-acid biosynthesis; L-histidine biosynthesis; L-histidine from 5-phospho-alpha-D-ribose 1-diphosphate: step 5/9. IGPS catalyzes the conversion of PRFAR and glutamine to IGP, AICAR and glutamate. The HisF subunit catalyzes the cyclization activity that produces IGP and AICAR from PRFAR using the ammonia provided by the HisH subunit. The sequence is that of Imidazole glycerol phosphate synthase subunit HisF from Staphylococcus aureus (strain Mu3 / ATCC 700698).